The sequence spans 418 residues: Gamma-glutamyl phosphate reductase (418 aa).

Belongs to the gamma-glutamyl phosphate reductase family.

It localises to the cytoplasm. It catalyses the reaction L-glutamate 5-semialdehyde + phosphate + NADP(+) = L-glutamyl 5-phosphate + NADPH + H(+). It participates in amino-acid biosynthesis; L-proline biosynthesis; L-glutamate 5-semialdehyde from L-glutamate: step 2/2. In terms of biological role, catalyzes the NADPH-dependent reduction of L-glutamate 5-phosphate into L-glutamate 5-semialdehyde and phosphate. The product spontaneously undergoes cyclization to form 1-pyrroline-5-carboxylate. In Geobacter sulfurreducens (strain ATCC 51573 / DSM 12127 / PCA), this protein is Gamma-glutamyl phosphate reductase.